Consider the following 310-residue polypeptide: MSLHPASPRLASLLLFILALHDTLALRLCSFNVRSFGASKKENHEAMDIIVKIIKRCDLILLMEIKDSSNNICPMLMEKLNGNSRRSTTYNYVISSRLGRNTYKEQYAFVYKEKLVSVKTKYHYHDYQDGDTDVFSREPFVVWFHSPFTAVKDFVIVPLHTTPETSVKEIDELVDVYTDVRSQWKTENFIFMGDFNAGCSYVPKKAWQNIRLRTDPKFVWLIGDQEDTTVKKSTSCAYDRIVLCGQEIVNSVVPRSSGVFDFQKAYDLSEEEALDVSDHFPVEFKLQSSRAFTNNRKSVSLKKRKKGNRS.

An N-terminal signal peptide occupies residues 1–25 (MSLHPASPRLASLLLFILALHDTLA). The Bipartite nuclear localization signal signature appears at 40–56 (KKENHEAMDIIVKIIKR). Catalysis depends on residues Glu-105 and His-160. Cys-199 and Cys-236 form a disulfide bridge. Residues 289 to 310 (SRAFTNNRKSVSLKKRKKGNRS) are not required for free DNA-nuclease activity but required for activity towards liposome-coated DNA. The short motif at 301–307 (LKKRKKG) is the Nuclear localization signal element.

The protein belongs to the DNase I family. The cofactor is Ca(2+). Mg(2+) is required as a cofactor. Post-translationally, poly-ADP-ribosylated by PARP1. ADP-ribosylation negatively regulates enzymatic activity during apoptosis. In terms of tissue distribution, expressed at high levels in liver, spleen and testes. Expressed at lower levels in heart, lungs, skeletal muscle and kidney. Not expressed in brain. Predominantly expressed in macrophages; at protein level. Secreted by mononuclear phagocytes.

It localises to the nucleus. It is found in the endoplasmic reticulum. The protein resides in the secreted. With respect to regulation, inhibited by zinc. Inhibited by heparin and proteolysis by plasmin. Functionally, has DNA hydrolytic activity. Is capable of both single- and double-stranded DNA cleavage, producing DNA fragments with 3'-OH ends. Can cleave chromatin to nucleosomal units and cleaves nucleosomal and liposome-coated DNA. Acts in internucleosomal DNA fragmentation (INDF) during apoptosis and necrosis. The role in apoptosis includes myogenic and neuronal differentiation, and BCR-mediated clonal deletion of self-reactive B cells. Is active on chromatin in apoptotic cell-derived membrane-coated microparticles and thus suppresses anti-DNA autoimmunity. Together with DNASE1, plays a key role in degrading neutrophil extracellular traps (NETs). NETs are mainly composed of DNA fibers and are released by neutrophils to bind pathogens during inflammation. Degradation of intravascular NETs by DNASE1 and DNASE1L3 is required to prevent formation of clots that obstruct blood vessels and cause organ damage following inflammation. This Mus musculus (Mouse) protein is Deoxyribonuclease gamma.